A 270-amino-acid chain; its full sequence is 4-hydroxy-tetrahydrodipicolinate reductase (270 aa).

NAD(+) is bound by residues 9-14 and Glu-35; that span reads GAGGRM. Residue Arg-36 participates in NADP(+) binding. Residues 99-101 and 123-126 each bind NAD(+); these read GTT and ASNY. The Proton donor/acceptor role is filled by His-156. Position 157 (His-157) interacts with (S)-2,3,4,5-tetrahydrodipicolinate. Lys-160 serves as the catalytic Proton donor. 166–167 lines the (S)-2,3,4,5-tetrahydrodipicolinate pocket; sequence GT.

Belongs to the DapB family.

The protein resides in the cytoplasm. The catalysed reaction is (S)-2,3,4,5-tetrahydrodipicolinate + NAD(+) + H2O = (2S,4S)-4-hydroxy-2,3,4,5-tetrahydrodipicolinate + NADH + H(+). It carries out the reaction (S)-2,3,4,5-tetrahydrodipicolinate + NADP(+) + H2O = (2S,4S)-4-hydroxy-2,3,4,5-tetrahydrodipicolinate + NADPH + H(+). It participates in amino-acid biosynthesis; L-lysine biosynthesis via DAP pathway; (S)-tetrahydrodipicolinate from L-aspartate: step 4/4. Functionally, catalyzes the conversion of 4-hydroxy-tetrahydrodipicolinate (HTPA) to tetrahydrodipicolinate. The protein is 4-hydroxy-tetrahydrodipicolinate reductase of Histophilus somni (strain 129Pt) (Haemophilus somnus).